A 633-amino-acid chain; its full sequence is Mini-chromosome maintenance complex-binding protein (633 aa).

Positions 154 to 198 are disordered; it reads PSTSYTPSRHKRSYEEDEDMEQHPSKQKEQHMGSGGDSHGCGEPK. Residues 174-184 are compositionally biased toward basic and acidic residues; sequence EQHPSKQKEQH.

The protein belongs to the MCMBP family. Interacts with the MCM complex: associates with the MCM3-7 complex which lacks MCM2, while it does not interact with the MCM complex when MCM2 is present (MCM2-7 complex).

The protein localises to the nucleus. In terms of biological role, associated component of the MCM complex that acts as a regulator of DNA replication. Binds to the MCM complex during late S phase and promotes the disassembly of the MCM complex from chromatin, thereby acting as a key regulator of pre-replication complex (pre-RC) unloading from replicated DNA. Can dissociate the MCM complex without addition of ATP; probably acts by destabilizing interactions of each individual subunits of the MCM complex. Required for sister chromatid cohesion. In Gallus gallus (Chicken), this protein is Mini-chromosome maintenance complex-binding protein (MCMBP).